Reading from the N-terminus, the 232-residue chain is Large ribosomal subunit protein uL1 (232 aa).

This sequence belongs to the universal ribosomal protein uL1 family. As to quaternary structure, part of the 50S ribosomal subunit.

Binds directly to 23S rRNA. The L1 stalk is quite mobile in the ribosome, and is involved in E site tRNA release. In terms of biological role, protein L1 is also a translational repressor protein, it controls the translation of the L11 operon by binding to its mRNA. The polypeptide is Large ribosomal subunit protein uL1 (Bartonella quintana (strain Toulouse) (Rochalimaea quintana)).